A 351-amino-acid polypeptide reads, in one-letter code: Inhibin beta C chain (351 aa).

An N-terminal signal peptide occupies residues 1–18; sequence MASSLLLALLFLTLATVV. Residues 19 to 236 constitute a propeptide that is removed on maturation; the sequence is NLKTDGPCPA…EGKHRVRRRG (218 aa). N-linked (GlcNAc...) asparagine glycosylation is found at asparagine 110, asparagine 142, and asparagine 160. Disulfide bonds link cysteine 239/cysteine 247, cysteine 246/cysteine 316, cysteine 275/cysteine 348, and cysteine 279/cysteine 350.

The protein belongs to the TGF-beta family. Homodimeric or heterodimeric through association with alpha and beta subunits, linked by one or more disulfide bonds. Inhibins are heterodimers of one alpha and one beta subunit. Activins are homo- or heterodimers of beta subunits only.

It is found in the secreted. Functionally, inhibins and activins inhibit and activate, respectively, the secretion of follitropin by the pituitary gland. Inhibins/activins are involved in regulating a number of diverse functions such as hypothalamic and pituitary hormone secretion, gonadal hormone secretion, germ cell development and maturation, erythroid differentiation, insulin secretion, nerve cell survival, embryonic axial development or bone growth, depending on their subunit composition. Inhibins appear to oppose the functions of activins. This chain is Inhibin beta C chain (Inhbc), found in Rattus norvegicus (Rat).